The sequence spans 324 residues: Beta-ketoacyl-[acyl-carrier-protein] synthase III (324 aa).

Residues Cys112 and His251 contribute to the active site. The segment at 252 to 256 (QANIR) is ACP-binding. The active site involves Asn281.

The protein belongs to the thiolase-like superfamily. FabH family. Homodimer.

It is found in the cytoplasm. It carries out the reaction malonyl-[ACP] + acetyl-CoA + H(+) = 3-oxobutanoyl-[ACP] + CO2 + CoA. It functions in the pathway lipid metabolism; fatty acid biosynthesis. Its function is as follows. Catalyzes the condensation reaction of fatty acid synthesis by the addition to an acyl acceptor of two carbons from malonyl-ACP. Catalyzes the first condensation reaction which initiates fatty acid synthesis and may therefore play a role in governing the total rate of fatty acid production. Possesses both acetoacetyl-ACP synthase and acetyl transacylase activities. Its substrate specificity determines the biosynthesis of branched-chain and/or straight-chain of fatty acids. The polypeptide is Beta-ketoacyl-[acyl-carrier-protein] synthase III (Desulfotalea psychrophila (strain LSv54 / DSM 12343)).